Here is a 193-residue protein sequence, read N- to C-terminus: UPF0314 protein Pden_1914 (193 aa).

The next 4 membrane-spanning stretches (helical) occupy residues 13 to 33, 62 to 82, 148 to 168, and 172 to 192; these read APYW…LWIG, WYTP…WLVA, LPVW…TWLI, and LALN…WQAA.

This sequence belongs to the UPF0314 family.

It is found in the cell membrane. This chain is UPF0314 protein Pden_1914, found in Paracoccus denitrificans (strain Pd 1222).